The sequence spans 73 residues: U-scoloptoxin(15)-Sm2a (73 aa).

The N-terminal stretch at 1 to 20 (MKFYIVFCLFVVLLINFAAA) is a signal peptide. Cystine bridges form between Cys-39-Cys-66 and Cys-43-Cys-68.

Belongs to the scoloptoxin-15 family. In terms of tissue distribution, expressed by the venom gland.

It is found in the secreted. Its function is as follows. Activity unknown, even that a lot of targets (Kv, Nav, Cav) have been tested and activities on insects and mice have been tested. This chain is U-scoloptoxin(15)-Sm2a, found in Scolopendra morsitans (Tanzanian blue ringleg centipede).